Here is a 300-residue protein sequence, read N- to C-terminus: Ornithine carbamoyltransferase (300 aa).

Carbamoyl phosphate contacts are provided by residues Ser-50–Thr-53, Gln-77, Arg-101, and His-128–Gln-131. L-ornithine-binding positions include Asn-159, Asp-219, and Ser-223 to Met-224. Residues Cys-257 to Leu-258 and Arg-285 each bind carbamoyl phosphate.

The protein belongs to the aspartate/ornithine carbamoyltransferase superfamily. OTCase family.

It is found in the cytoplasm. It catalyses the reaction carbamoyl phosphate + L-ornithine = L-citrulline + phosphate + H(+). It functions in the pathway amino-acid degradation; L-arginine degradation via ADI pathway; carbamoyl phosphate from L-arginine: step 2/2. Functionally, reversibly catalyzes the transfer of the carbamoyl group from carbamoyl phosphate (CP) to the N(epsilon) atom of ornithine (ORN) to produce L-citrulline. This chain is Ornithine carbamoyltransferase, found in Haloquadratum walsbyi (strain DSM 16790 / HBSQ001).